A 614-amino-acid chain; its full sequence is UvrABC system protein C (614 aa).

Residues 12–89 (DKPGVYLFRG…IKEHRPRYNV (78 aa)) form the GIY-YIG domain. Residues 198 to 233 (ADLVRGLARKMEAAAANLEFERAAELRDQLRAVEQV) enclose the UVR domain.

It belongs to the UvrC family. Interacts with UvrB in an incision complex.

It localises to the cytoplasm. Functionally, the UvrABC repair system catalyzes the recognition and processing of DNA lesions. UvrC both incises the 5' and 3' sides of the lesion. The N-terminal half is responsible for the 3' incision and the C-terminal half is responsible for the 5' incision. The polypeptide is UvrABC system protein C (Desulforudis audaxviator (strain MP104C)).